We begin with the raw amino-acid sequence, 179 residues long: MSRIGRLPITVPAGVDVTIDGAAVTVKGPKGELSHTVAAPISVERTEDGTLQVTRPDDERVSRSLHGLTRTLISNMVEGVTKGYEKKLEIVGTGYRVTPKGSDLEFALGFSHPVVVKAPAGITFAVENNTRFSVAGIDKQQVGEIAANIRKLRKPDPYKGKGVRYAGEQIRRKVGKAGK.

This sequence belongs to the universal ribosomal protein uL6 family. Part of the 50S ribosomal subunit.

This protein binds to the 23S rRNA, and is important in its secondary structure. It is located near the subunit interface in the base of the L7/L12 stalk, and near the tRNA binding site of the peptidyltransferase center. This Kineococcus radiotolerans (strain ATCC BAA-149 / DSM 14245 / SRS30216) protein is Large ribosomal subunit protein uL6.